We begin with the raw amino-acid sequence, 339 residues long: N-acetyl-gamma-glutamyl-phosphate reductase (339 aa).

Cys-144 is a catalytic residue.

It belongs to the NAGSA dehydrogenase family. Type 1 subfamily.

It localises to the cytoplasm. It catalyses the reaction N-acetyl-L-glutamate 5-semialdehyde + phosphate + NADP(+) = N-acetyl-L-glutamyl 5-phosphate + NADPH + H(+). It functions in the pathway amino-acid biosynthesis; L-arginine biosynthesis; N(2)-acetyl-L-ornithine from L-glutamate: step 3/4. Catalyzes the NADPH-dependent reduction of N-acetyl-5-glutamyl phosphate to yield N-acetyl-L-glutamate 5-semialdehyde. The protein is N-acetyl-gamma-glutamyl-phosphate reductase of Methanobrevibacter smithii (strain ATCC 35061 / DSM 861 / OCM 144 / PS).